The following is a 668-amino-acid chain: Transketolase 2 (668 aa).

His-26 is a binding site for substrate. Thiamine diphosphate-binding positions include His-66 and 114-116; that span reads GPL. Position 155 (Asp-155) interacts with Mg(2+). Residues Gly-156 and Asn-185 each contribute to the thiamine diphosphate site. The Mg(2+) site is built by Asn-185 and Ile-187. The substrate site is built by His-261, Arg-358, and Ser-385. His-261 contributes to the thiamine diphosphate binding site. Glu-413 functions as the Proton donor in the catalytic mechanism. Position 439 (Phe-439) interacts with thiamine diphosphate. 3 residues coordinate substrate: His-463, Asp-471, and Arg-522.

This sequence belongs to the transketolase family. Homodimer. Mg(2+) is required as a cofactor. Ca(2+) serves as cofactor. Requires Mn(2+) as cofactor. It depends on Co(2+) as a cofactor. The cofactor is thiamine diphosphate.

The enzyme catalyses D-sedoheptulose 7-phosphate + D-glyceraldehyde 3-phosphate = aldehydo-D-ribose 5-phosphate + D-xylulose 5-phosphate. Functionally, catalyzes the transfer of a two-carbon ketol group from a ketose donor to an aldose acceptor, via a covalent intermediate with the cofactor thiamine pyrophosphate. The polypeptide is Transketolase 2 (tktB) (Pasteurella multocida (strain Pm70)).